The primary structure comprises 123 residues: Prostate stem cell antigen (123 aa).

Residues 1–20 (MKTVFFLLLATYLALHPGAA) form the signal peptide. Residues 21-95 (LQCYSCTAQM…CCYSDLCNVN (75 aa)) enclose the UPAR/Ly6 domain. Cystine bridges form between C23–C48, C26–C35, C41–C66, C70–C86, and C87–C92. A glycan (N-linked (GlcNAc...) asparagine) is linked at N40. A lipid anchor (GPI-anchor amidated asparagine) is attached at N95. Residues 96–123 (GAHTLKPPTTLGLLTVLCSLLLWGSSRL) constitute a propeptide, removed in mature form.

Interacts with CHRNA4. In terms of tissue distribution, predominantly expressed in prostate. Also found in spleen, liver, lung, prostate, kidney and testis. Expressed in brain cortex; expression is increased in transgenic mouse model of Alzheimer disease (at protein level).

It localises to the cell membrane. In terms of biological role, may be involved in the regulation of cell proliferation. Its function is as follows. May act as a modulator of nicotinic acetylcholine receptors (nAChRs) activity. In vitro inhibits nicotine-induced signaling probably implicating alpha-3:beta-2- or alpha-7-containing nAChRs. In Mus musculus (Mouse), this protein is Prostate stem cell antigen (Psca).